The chain runs to 278 residues: ADP-dependent (S)-NAD(P)H-hydrate dehydratase (278 aa).

The YjeF C-terminal domain occupies 4–276 (DDDLVRQVIR…KAIPSWMKKL (273 aa)). Residues A39, G102, and H152 each coordinate (6S)-NADPHX. AMP is bound at residue G216. D217 contacts (6S)-NADPHX.

The protein belongs to the NnrD/CARKD family. In terms of assembly, homotetramer. The cofactor is Mg(2+).

It catalyses the reaction (6S)-NADHX + ADP = AMP + phosphate + NADH + H(+). It carries out the reaction (6S)-NADPHX + ADP = AMP + phosphate + NADPH + H(+). Catalyzes the dehydration of the S-form of NAD(P)HX at the expense of ADP, which is converted to AMP. Together with NAD(P)HX epimerase, which catalyzes the epimerization of the S- and R-forms, the enzyme allows the repair of both epimers of NAD(P)HX, a damaged form of NAD(P)H that is a result of enzymatic or heat-dependent hydration. The polypeptide is ADP-dependent (S)-NAD(P)H-hydrate dehydratase (Streptococcus thermophilus).